Reading from the N-terminus, the 417-residue chain is S-inosyl-L-homocysteine hydrolase (417 aa).

Residues D124 and E149 each contribute to the substrate site. 150–152 contacts NAD(+); the sequence is TTT. 2 residues coordinate substrate: K179 and D183. Residues N184, 213–218, E236, N271, 292–294, and N339 each bind NAD(+); these read GYGWCG and SGH.

Belongs to the adenosylhomocysteinase family. It depends on NAD(+) as a cofactor.

The protein resides in the cytoplasm. The catalysed reaction is S-inosyl-L-homocysteine + H2O = L-homocysteine + inosine. The protein operates within amino-acid biosynthesis; S-adenosyl-L-methionine biosynthesis. In terms of biological role, catalyzes the hydrolysis of S-inosyl-L-homocysteine (SIH) to L-homocysteine (Hcy) and inosine. Likely functions in a S-adenosyl-L-methionine (SAM) recycling pathway from S-adenosyl-L-homocysteine (SAH) produced from SAM-dependent methylation reactions. Can also catalyze the reverse reaction in vitro, i.e. the synthesis of SIH from Hcy and inosine. The polypeptide is S-inosyl-L-homocysteine hydrolase (Methanothermobacter thermautotrophicus (strain ATCC 29096 / DSM 1053 / JCM 10044 / NBRC 100330 / Delta H) (Methanobacterium thermoautotrophicum)).